The sequence spans 206 residues: MARYTGATCRLCRREGMKLFLKGDRCFTDKCAFVRRSYAPGQHGASKKKMSNYGIQLREKQKARRIYGILEGQFRTYYEKAEHMKGITGENLLKLLEMRLDNVVYRLGYGASRNEARQLVTHGHFLVNGKKVDICSYHVSMNDVITVCEKSRSSEKFKTFVENPKTLPKWLEANVDNYEGKVVAEPSREDIDVPVNETLIVELYSK.

The S4 RNA-binding domain maps to 98 to 163 (MRLDNVVYRL…SEKFKTFVEN (66 aa)).

This sequence belongs to the universal ribosomal protein uS4 family. Part of the 30S ribosomal subunit. Contacts protein S5. The interaction surface between S4 and S5 is involved in control of translational fidelity.

In terms of biological role, one of the primary rRNA binding proteins, it binds directly to 16S rRNA where it nucleates assembly of the body of the 30S subunit. With S5 and S12 plays an important role in translational accuracy. The protein is Small ribosomal subunit protein uS4 of Clostridium botulinum (strain Alaska E43 / Type E3).